Here is a 213-residue protein sequence, read N- to C-terminus: MDLTAENLGVRRGEDFIFMNISFKLSDGEALVLTGRNGSGKSTLLRTVAGLLRPEQGRVKIAGEGIDAEMRPSEAFHYLGHRNAMKTELTVAENLRFWKDFLGDFPGSTGVAIDEAAAIVGLAGITHLPFGYLSAGQQRRFAMAKLLVAWRPVWILDEPTAALDRAADAMFTDLVKSHLGKGGIVLAATHQPLGLEKAQELQMTGFAGVETWA.

The ABC transporter domain occupies 3 to 211; that stretch reads LTAENLGVRR…QMTGFAGVET (209 aa). Position 35 to 42 (35 to 42) interacts with ATP; sequence GRNGSGKS.

The protein belongs to the ABC transporter superfamily. CcmA exporter (TC 3.A.1.107) family. The complex is composed of two ATP-binding proteins (CcmA) and two transmembrane proteins (CcmB).

Its subcellular location is the cell inner membrane. It carries out the reaction heme b(in) + ATP + H2O = heme b(out) + ADP + phosphate + H(+). Part of the ABC transporter complex CcmAB involved in the biogenesis of c-type cytochromes; once thought to export heme, this seems not to be the case, but its exact role is uncertain. Responsible for energy coupling to the transport system. The sequence is that of Cytochrome c biogenesis ATP-binding export protein CcmA from Agrobacterium fabrum (strain C58 / ATCC 33970) (Agrobacterium tumefaciens (strain C58)).